We begin with the raw amino-acid sequence, 661 residues long: Heme transporter BhuA (661 aa).

A signal peptide spans 1–23 (MKFTRTLVLASTSLLATVATSQA). Residues 48–159 (KDNIEATGGT…AAGAIRYETV (112 aa)) enclose the TBDR plug domain. The 492-residue stretch at 170–661 (TFGARIIGSY…TFTFQTAFKF (492 aa)) folds into the TBDR beta-barrel domain.

The protein belongs to the TonB-dependent receptor family.

It localises to the cell outer membrane. Heme transporter. This chain is Heme transporter BhuA (bhuA), found in Brucella abortus biovar 1 (strain 9-941).